Here is a 122-residue protein sequence, read N- to C-terminus: MNKEEIMSAIEEMSVLELSELVEDLEEKFGVSAAAPVAVAGGAAGAGAAAEEKSEFDVFLADIGGKKIKVIKAVRELTGLGLKEAKGVVDDAPGNVKEGLSKEDAEEMKEKLEEAGATVELK.

The disordered stretch occupies residues 94–122 (GNVKEGLSKEDAEEMKEKLEEAGATVELK). A compositionally biased stretch (basic and acidic residues) spans 99-114 (GLSKEDAEEMKEKLEE).

It belongs to the bacterial ribosomal protein bL12 family. In terms of assembly, homodimer. Part of the ribosomal stalk of the 50S ribosomal subunit. Forms a multimeric L10(L12)X complex, where L10 forms an elongated spine to which 2 to 4 L12 dimers bind in a sequential fashion. Binds GTP-bound translation factors.

Functionally, forms part of the ribosomal stalk which helps the ribosome interact with GTP-bound translation factors. Is thus essential for accurate translation. The polypeptide is Large ribosomal subunit protein bL12 (Halanaerobium praevalens).